We begin with the raw amino-acid sequence, 266 residues long: F-box only protein 50 (266 aa).

A compositionally biased stretch (basic and acidic residues) spans 1-16 (MEKTQDRDTLSGRMEA). Positions 1–53 (MEKTQDRDTLSGRMEAEGSLNSEELPPHPQSPPPPPSPRSPTSPVTPELPQPN) are disordered. Pro residues predominate over residues 27 to 41 (PHPQSPPPPPSPRSP). Phosphoserine is present on residues serine 31, serine 37, serine 40, and serine 43. Residue threonine 46 is modified to Phosphothreonine. The 179-residue stretch at 86 to 264 (LFLERPLYRN…VTDSSVSVQL (179 aa)) folds into the FBA domain.

In terms of tissue distribution, strongly expressed in kidney. Weakly expressed in stomach, colon, duodenum and prostate.

Its subcellular location is the cytoplasm. Promotes cell proliferation. The sequence is that of F-box only protein 50 (Nccrp1) from Mus musculus (Mouse).